A 171-amino-acid chain; its full sequence is Peptide deformylase (171 aa).

Residues Cys91 and His133 each coordinate Fe cation. Glu134 is an active-site residue. His137 lines the Fe cation pocket.

This sequence belongs to the polypeptide deformylase family. Fe(2+) serves as cofactor.

It catalyses the reaction N-terminal N-formyl-L-methionyl-[peptide] + H2O = N-terminal L-methionyl-[peptide] + formate. Functionally, removes the formyl group from the N-terminal Met of newly synthesized proteins. Requires at least a dipeptide for an efficient rate of reaction. N-terminal L-methionine is a prerequisite for activity but the enzyme has broad specificity at other positions. This is Peptide deformylase from Hamiltonella defensa subsp. Acyrthosiphon pisum (strain 5AT).